A 144-amino-acid polypeptide reads, in one-letter code: NADPH-dependent 7-cyano-7-deazaguanine reductase (144 aa).

Over residues 1-21 the composition is skewed to polar residues; that stretch reads MSQSPIQNPTSDPNAQSVQET. The segment at 1–27 is disordered; the sequence is MSQSPIQNPTSDPNAQSVQETSESKYG. Cys-61 (thioimide intermediate) is an active-site residue. The active-site Proton donor is the Asp-68. Substrate-binding positions include 83–85 and 102–103; these read VEL and HE.

The protein belongs to the GTP cyclohydrolase I family. QueF type 1 subfamily.

The protein resides in the cytoplasm. The enzyme catalyses 7-aminomethyl-7-carbaguanine + 2 NADP(+) = 7-cyano-7-deazaguanine + 2 NADPH + 3 H(+). Its pathway is tRNA modification; tRNA-queuosine biosynthesis. Catalyzes the NADPH-dependent reduction of 7-cyano-7-deazaguanine (preQ0) to 7-aminomethyl-7-deazaguanine (preQ1). In Acaryochloris marina (strain MBIC 11017), this protein is NADPH-dependent 7-cyano-7-deazaguanine reductase.